A 157-amino-acid chain; its full sequence is Class 10 plant pathogenesis-related protein 2E (157 aa).

Asp8 lines the trans-zeatin pocket. Pro32, Val35, and Ile38 together coordinate Ca(2+). The trans-zeatin site is built by Glu60, His69, Tyr81, and Tyr83.

It belongs to the BetVI family.

Its subcellular location is the cytoplasm. The protein localises to the cytosol. Its function is as follows. Class II ribonuclease (RNase). Binds to cytokinins. Interacts with melatonin. This chain is Class 10 plant pathogenesis-related protein 2E, found in Lupinus luteus (European yellow lupine).